We begin with the raw amino-acid sequence, 294 residues long: 4-hydroxybenzoate octaprenyltransferase (294 aa).

8 helical membrane passes run 20–42, 98–118, 120–140, 145–165, 175–195, 218–238, 242–262, and 274–294; these read LLRIDRPIGTLLLLWPTYWALWL, WEAVALFAGLCLVSFLMVVLF, NTLTLYLSFGGALLAFIYPFM, HLPQLFLGAAFSWAIPMAWAA, WLLFTANVLWTVAYDTLYAMV, AIIALLQTMVVVILVMVGQRA, SFYYLGVVAMATLFVYHQYLA, and FLNNNWAGFAVFLGLALDLAF.

Belongs to the UbiA prenyltransferase family. Requires Mg(2+) as cofactor.

The protein resides in the cell inner membrane. It catalyses the reaction all-trans-octaprenyl diphosphate + 4-hydroxybenzoate = 4-hydroxy-3-(all-trans-octaprenyl)benzoate + diphosphate. It functions in the pathway cofactor biosynthesis; ubiquinone biosynthesis. Catalyzes the prenylation of para-hydroxybenzoate (PHB) with an all-trans polyprenyl group. Mediates the second step in the final reaction sequence of ubiquinone-8 (UQ-8) biosynthesis, which is the condensation of the polyisoprenoid side chain with PHB, generating the first membrane-bound Q intermediate 3-octaprenyl-4-hydroxybenzoate. In Marinobacter nauticus (strain ATCC 700491 / DSM 11845 / VT8) (Marinobacter aquaeolei), this protein is 4-hydroxybenzoate octaprenyltransferase.